Consider the following 255-residue polypeptide: Large ribosomal subunit protein uL4 (255 aa).

It belongs to the universal ribosomal protein uL4 family. In terms of assembly, part of the 50S ribosomal subunit.

Its function is as follows. One of the primary rRNA binding proteins, this protein initially binds near the 5'-end of the 23S rRNA. It is important during the early stages of 50S assembly. It makes multiple contacts with different domains of the 23S rRNA in the assembled 50S subunit and ribosome. In terms of biological role, forms part of the polypeptide exit tunnel. In Thermoplasma acidophilum (strain ATCC 25905 / DSM 1728 / JCM 9062 / NBRC 15155 / AMRC-C165), this protein is Large ribosomal subunit protein uL4.